A 318-amino-acid polypeptide reads, in one-letter code: Ankyrin repeat domain-containing protein 1 (318 aa).

A coiled-coil region spans residues 37-77; sequence ALEKQEDLKTTSKSLIELEEEKQSKEKQLKSELLKKKLEER. ANK repeat units follow at residues 151–180, 184–213, 217–246, 250–279, and 283–314; these read YKRT…NIEF, LEST…AINA, LLST…DLNA, EGDT…NLNI, and AGKT…KNSH.

The protein localises to the nucleus. In terms of biological role, may act as a nuclear transcription factor that negatively regulates the expression of cardiac genes. The polypeptide is Ankyrin repeat domain-containing protein 1 (ankrd1) (Xenopus laevis (African clawed frog)).